We begin with the raw amino-acid sequence, 366 residues long: Chitoporin (366 aa).

The N-terminal stretch at 1–23 (MDKMFKRTVIGAAVALASTGLMA) is a signal peptide.

This sequence belongs to the Gram-negative porin family.

The protein resides in the cell outer membrane. In terms of biological role, involved in the uptake of chitosugars. The polypeptide is Chitoporin (chiP) (Vibrio furnissii).